The sequence spans 40 residues: Photosystem II reaction center protein J (40 aa).

Residues 8-28 (IPLWLIGTVTGILVIGLIGFF) traverse the membrane as a helical segment.

This sequence belongs to the PsbJ family. As to quaternary structure, PSII is composed of 1 copy each of membrane proteins PsbA, PsbB, PsbC, PsbD, PsbE, PsbF, PsbH, PsbI, PsbJ, PsbK, PsbL, PsbM, PsbT, PsbX, PsbY, PsbZ, Psb30/Ycf12, at least 3 peripheral proteins of the oxygen-evolving complex and a large number of cofactors. It forms dimeric complexes.

The protein localises to the plastid. It localises to the chloroplast thylakoid membrane. Its function is as follows. One of the components of the core complex of photosystem II (PSII). PSII is a light-driven water:plastoquinone oxidoreductase that uses light energy to abstract electrons from H(2)O, generating O(2) and a proton gradient subsequently used for ATP formation. It consists of a core antenna complex that captures photons, and an electron transfer chain that converts photonic excitation into a charge separation. This chain is Photosystem II reaction center protein J, found in Zea mays (Maize).